Here is a 184-residue protein sequence, read N- to C-terminus: ADP-ribosylation factor-like protein 2 (184 aa).

Gly2 carries N-myristoyl glycine lipidation. GTP-binding positions include 23–30 (GLDNAGKT), 66–70 (DVGGQ), Gly68, and 125–128 (NKSD).

It belongs to the small GTPase superfamily. Arf family. As to expression, in the embryo, strongly expressed in migrating hypodermal cells. Shortly before the beginning of elongation, expressed in many developing neurons where it persists throughout adulthood. In the larva, highly expressed in migrating hypodermal cells and the uterus. Also expressed in vulva, spermatheca, sheath cells, distal tips cells and proctoderm of the male tail.

It is found in the cytoplasm. It localises to the cell membrane. The protein localises to the cytoskeleton. Its subcellular location is the microtubule organizing center. The protein resides in the centrosome. Functionally, GTP-binding protein that functions in embryogenesis, cytokinesis, germline development and microtubulule cytoskeleton dynamics. This chain is ADP-ribosylation factor-like protein 2 (evl-20), found in Caenorhabditis elegans.